Reading from the N-terminus, the 106-residue chain is ATP-dependent Clp protease adapter protein ClpS (106 aa).

A compositionally biased stretch (basic and acidic residues) spans 1 to 10; the sequence is MSQKTVHDQD. A disordered region spans residues 1 to 23; sequence MSQKTVHDQDNALLLETGNTKVA.

Belongs to the ClpS family. As to quaternary structure, binds to the N-terminal domain of the chaperone ClpA.

Involved in the modulation of the specificity of the ClpAP-mediated ATP-dependent protein degradation. This chain is ATP-dependent Clp protease adapter protein ClpS, found in Xylella fastidiosa (strain M23).